The chain runs to 433 residues: Protoheme IX farnesyltransferase 2 (433 aa).

The segment at 1-164 is unknown; sequence MQRFTGLVTA…LTKPRLMWLL (164 aa). Transmembrane regions (helical) follow at residues 4-24, 35-55, 67-87, 95-115, 160-180, 184-204, 236-256, 257-277, 282-304, 308-330, 357-377, 378-398, and 413-433; these read FTGL…LGVA, AVAH…AAAL, WGVT…MAVL, LHLF…TWHL, LMWL…VTGA, GVTI…AGTF, AFGV…VNPL, AAAL…VVLK, WNTV…AVAG, LPAL…NLAI, ILYW…VAGF, GPVY…TVVV, and HASN…TMVI. Residues 165 to 430 are protoheme IX prenyltransferase; it reads CLLALSGMAL…ALLVAILVET (266 aa).

The protein in the C-terminal section; belongs to the UbiA prenyltransferase family. Protoheme IX farnesyltransferase subfamily.

It is found in the cell membrane. The catalysed reaction is heme b + (2E,6E)-farnesyl diphosphate + H2O = Fe(II)-heme o + diphosphate. Its pathway is porphyrin-containing compound metabolism; heme O biosynthesis; heme O from protoheme: step 1/1. In terms of biological role, converts heme B (protoheme IX) to heme O by substitution of the vinyl group on carbon 2 of heme B porphyrin ring with a hydroxyethyl farnesyl side group. In Natronomonas pharaonis (strain ATCC 35678 / DSM 2160 / CIP 103997 / JCM 8858 / NBRC 14720 / NCIMB 2260 / Gabara) (Halobacterium pharaonis), this protein is Protoheme IX farnesyltransferase 2 (ctaB2).